The sequence spans 147 residues: Putative nickel-responsive regulator (147 aa).

Positions 76, 87, 89, and 95 each coordinate Ni(2+).

This sequence belongs to the transcriptional regulatory CopG/NikR family. The cofactor is Ni(2+).

In terms of biological role, transcriptional regulator. This is Putative nickel-responsive regulator from Rhodopseudomonas palustris (strain TIE-1).